A 275-amino-acid polypeptide reads, in one-letter code: Nitrogenase iron protein 1 (275 aa).

An ATP-binding site is contributed by 9–16; the sequence is GKGGIGKS. Cys-97 contributes to the [4Fe-4S] cluster binding site. Arg-100 carries the ADP-ribosylarginine; by dinitrogenase reductase ADP-ribosyltransferase modification. Residue Cys-132 coordinates [4Fe-4S] cluster.

It belongs to the NifH/BchL/ChlL family. As to quaternary structure, homodimer. [4Fe-4S] cluster serves as cofactor. The reversible ADP-ribosylation of Arg-100 inactivates the nitrogenase reductase and regulates nitrogenase activity.

The enzyme catalyses N2 + 8 reduced [2Fe-2S]-[ferredoxin] + 16 ATP + 16 H2O = H2 + 8 oxidized [2Fe-2S]-[ferredoxin] + 2 NH4(+) + 16 ADP + 16 phosphate + 6 H(+). In terms of biological role, the key enzymatic reactions in nitrogen fixation are catalyzed by the nitrogenase complex, which has 2 components: the iron protein and the molybdenum-iron protein. In Methanothermobacter marburgensis (strain ATCC BAA-927 / DSM 2133 / JCM 14651 / NBRC 100331 / OCM 82 / Marburg) (Methanobacterium thermoautotrophicum), this protein is Nitrogenase iron protein 1 (nifH1).